Here is a 1670-residue protein sequence, read N- to C-terminus: MATAVETEACQPTDASWESGGGGDDEMKQALPELESSQQNGGGGGLNIAEPSGGAGREENAGAEAAQSLSHEQPQDSSEAGAAALPRGPEEPERPVRRSFQIPRKSREKKALFQPLTPGSREFEDVVNILHSSYLEPTSVTNFNYRRACLVHNELLEKEFTEKRRELKFDGRLDKELSESYAFLMVDRYQVQTICEKGLHVGQSKITILGSPSMGVYLSRYADLLQANPLDTGAMGDVVIFKIMKGKIKSIYDPMGVKSLESMLNKSALDPTPKHECHVSKNANRITSLLAYRAYELTQYYFYEYGFDELRRRPRHVCPYAVVSFTYKDDIQTPKFVPSSRSNSFNTDRNIDKYNYTLWKGQLLNKGKLLCYISLRSATRAFLPIKLPEKLDVETVMSIDHLKQKIPPALFYKETYLGPNEVLKNGMYCSLYEVVEKTRIGSNMESLLQKLDREKLVLVKPLGDRGYLFLLSPYQMVPPYEYQTAKSRVLHALFLFQEPRSIVTSQKGSTNAAPQERHESMPDVLKIAQFLQFSLIQCRKEFKNISAINFHSVVEKYVSEFFKRGFGSGKREFIMFPYDSRLDDKKFLYSAPRNKSHIDTCLHAYIFRPEVYQLPICKLKELFEENRKLQQFSPLSDYEGQEEEMNGTKMKFGKRNNSRGEAIISGKQRSSHSLDYDKDRVKELINLIQCRKKSVGGDSDTEDMRSKTVLKRKLEDLPENMRKLAKTSNLSENCHLYEESPQPIGSLGHDADLRRQQQDTCNSGIADIHRLFNWLSETLANARHSDASLTDTVNKALGLSTDDAYEELRQKHEYELNSTPDKKDYEQPTCAKVENAQFKGTQSLLLEVDATSKYSVAISTSEVGTDHKLHLKEDPNLISVNNFEDCSLCPSVPIEHGFRRQQSKSNNVEETEIHWKLIPITGGNARSPEDQLGKHGEKQTPGMKSPEEQLVCVPPQEAFPNDPRVINRQRSSDYQFPSSPFTDTLKGTTEDDVLTGQVEEQCVPAAEAEPPAVSETTERTVLGEYNLFSRKIEEILKQKNVSYVSTVSTPIFSTQEKMKRLSEFIYSKTSKAGVQEFVDGLHEKLNTIIIKASAKGGNLPPVSPNDSGAKIASNPLERHVIPVSSSDFNNKHLLEPLCSDPLKDTNSDEQHSTSALTEVEMNQPQHATELMVTSDHIVPGDMAREPVEETTKSPSDVNISAQPALSNFISQLEPEVFNSLVKIMKDVQKNTVKFYIHEEEESVLCKEIKEYLIKLGNTECHPEQFLERRSKLDKLLIIIQNEDIAGFIHKIPGLVTLKKLPCVSFAGVDSLDDVKNHTYNELFVSGGFIVSDESILNPEVVTVENLKNFLTFLEELSTPEGKWQWKVHCKFQKKLKELGRLNAKALSLLTLLNVYQKKHLVEILSYHNCDSQTRNAPELDCLIRLQAQNIQQRHIVFLTEKNIKMLSSYTDNGIVVATAEDFMQNFKNLVGYHNSITEENLPQLGANENLESQSALLENDEKDEEDMSLDSGDEISHIEVCSNFHSEIWEKETKGSRGTDQKKNTQIELQSSPDVQNSLLEDKTYLDSEERTSIDIVCSEGENSNSTEQDSYSNFQVYHSQLNMSHQFSHFNVLTHQTFLGTPYALSSSQSQENENYFLSAYTESLDRDKSPPPLSWGKSDSSRPYSQEK.

The segment at 1-110 is disordered; sequence MATAVETEAC…QIPRKSREKK (110 aa). At Ala-2 the chain carries N-acetylalanine. The span at 67 to 78 shows a compositional bias: polar residues; the sequence is QSLSHEQPQDSS. Residue Ser-344 is modified to Phosphoserine. Lys-586 is covalently cross-linked (Glycyl lysine isopeptide (Lys-Gly) (interchain with G-Cter in SUMO2)). Residues Ser-633, Ser-636, Ser-673, and Ser-800 each carry the phosphoserine modification. Residues Lys-823 and Lys-832 each participate in a glycyl lysine isopeptide (Lys-Gly) (interchain with G-Cter in SUMO2) cross-link. A Phosphoserine modification is found at Ser-843. Residue Lys-872 forms a Glycyl lysine isopeptide (Lys-Gly) (interchain with G-Cter in SUMO2) linkage. The interval 921–947 is disordered; that stretch reads TGGNARSPEDQLGKHGEKQTPGMKSPE. Phosphoserine is present on residues Ser-927, Ser-971, and Ser-979. Residues 927–938 show a composition bias toward basic and acidic residues; the sequence is SPEDQLGKHGEK. 2 positions are modified to phosphothreonine: Thr-982 and Thr-1049. Ser-1103 bears the Phosphoserine mark. Basic and acidic residues predominate over residues 1532-1545; the sequence is ETKGSRGTDQKKNT. Disordered stretches follow at residues 1532 to 1558 and 1638 to 1670; these read ETKGSRGTDQKKNTQIELQSSPDVQNS and FLSAYTESLDRDKSPPPLSWGKSDSSRPYSQEK. Composition is skewed to polar residues over residues 1546 to 1558 and 1659 to 1670; these read QIELQSSPDVQNS and KSDSSRPYSQEK. Residue Ser-1552 is modified to Phosphoserine.

It belongs to the TASOR family. Component of the HUSH complex; at least composed of TASOR, PPHLN1 and MPHOSPH8. Interacts with MORC2; the interaction associateS MORC2 with the HUSH complex which recruits MORC2 to heterochromatic loci. Interacts with ZNF638; leading to recruitment of the HUSH complex to unintegrated retroviral DNA. Interacts with INPP5A, EML1, SV1L, GPSM2, ITGB3BP, CNTN1, ETFA, PSMD8, S100A10, MPHOSPH8, TMEM100, ALB, PARPBP, HCFC2, NCBP1 and SETDB1.

The protein localises to the nucleus. The protein resides in the chromosome. In terms of biological role, component of the HUSH complex, a multiprotein complex that mediates epigenetic repression. The HUSH complex is recruited to genomic loci rich in H3K9me3 and is required to maintain transcriptional silencing by promoting recruitment of SETDB1, a histone methyltransferase that mediates further deposition of H3K9me3, as well as MORC2. Also represses L1 retrotransposons in collaboration with MORC2 and, probably, SETDB1, the silencing is dependent of repressive epigenetic modifications, such as H3K9me3 mark. Silencing events often occur within introns of transcriptionally active genes, and lead to the down-regulation of host gene expression. The HUSH complex is also involved in the silencing of unintegrated retroviral DNA by being recruited by ZNF638: some part of the retroviral DNA formed immediately after infection remains unintegrated in the host genome and is transcriptionally repressed. Plays a crucial role in early embryonic development. Involved in the organization of spindle poles and spindle apparatus assembly during zygotic division. Plays an important role in maintaining epiblast fitness or potency. This Homo sapiens (Human) protein is Protein TASOR.